We begin with the raw amino-acid sequence, 690 residues long: Elongation factor G (690 aa).

The 276-residue stretch at Glu8 to Leu283 folds into the tr-type G domain. GTP-binding positions include Ala17–Thr24, Asp81–His85, and Asn135–Asp138.

It belongs to the TRAFAC class translation factor GTPase superfamily. Classic translation factor GTPase family. EF-G/EF-2 subfamily.

It is found in the cytoplasm. Catalyzes the GTP-dependent ribosomal translocation step during translation elongation. During this step, the ribosome changes from the pre-translocational (PRE) to the post-translocational (POST) state as the newly formed A-site-bound peptidyl-tRNA and P-site-bound deacylated tRNA move to the P and E sites, respectively. Catalyzes the coordinated movement of the two tRNA molecules, the mRNA and conformational changes in the ribosome. This Rhodopseudomonas palustris (strain ATCC BAA-98 / CGA009) protein is Elongation factor G.